A 215-amino-acid chain; its full sequence is Probable serine/threonine-protein kinase 2 (215 aa).

Residues 1–205 (MKPEQLVYLN…WLLKEMEQLL (205 aa)) enclose the Protein kinase domain.

Belongs to the protein kinase superfamily. Ser/Thr protein kinase family. In terms of assembly, interacts with the kinase domain of host EIF2AK2.

It is found in the host cytoplasm. The enzyme catalyses L-seryl-[protein] + ATP = O-phospho-L-seryl-[protein] + ADP + H(+). It catalyses the reaction L-threonyl-[protein] + ATP = O-phospho-L-threonyl-[protein] + ADP + H(+). In terms of biological role, plays a role in the inhibition of host eIF2alpha/EIF2S1 phosphorylation, thereby increasing viral fitness. In the insect host, targets the endogenous insect heme-regulated inhibitor (HRI)-like eIF2alpha kinase. The chain is Probable serine/threonine-protein kinase 2 (PK2) from Autographa californica nuclear polyhedrosis virus (AcMNPV).